We begin with the raw amino-acid sequence, 585 residues long: MAPGEKIKAKIKKNLPVTGPQAPTIKELMRWYCLNTNTHGCRRIVVSRGRLRRLLWIGFTLTAVALILWQCALLVFSFYTVSVSIKVHFRKLDFPAVTICNINPYKYSTVRHLLADLEQETREALKSLYGFPESRKRREAESWSSISEGKQPRFSHRIPLLIFDQDEKGKARDFFTGRKRKVGGSIIHKASNVMHIESKQVVGFQLNFTLFHHPMHGNCYTFNNRENETILSTSMGGSEYGLQVILYINEEEYNPFLVSSTGAKVIIHRQDEYPFVEDVGTEIETAMVTSIGMHLTESFKLSEPYSQCTEDGSDVPIRNIYNAAYSLQICLHSCFQTKMVEKCGCAQYSQPLPPAANYCNYQQHPNWMYCYYQLHRAFVQEELGCQSVCKEACSFKEWTLTTSLAQWPSVVSEKWLLPVLTWDQGRQVNKKLNKTDLAKLLIFYKDLNQRSIMESPANSIEMLLSNFGGQLGLWMSCSVVCVIEIIEVFFIDFFSIIARRQWQKAKEWWARKQAPPCPEAPRSPQGQDNPALDIDDDLPTFNSALHLPPALGTQVPGTPPPKYNTLRLERAFSNQLTDTQMLDEL.

The Cytoplasmic portion of the chain corresponds to 1–55; it reads MAPGEKIKAKIKKNLPVTGPQAPTIKELMRWYCLNTNTHGCRRIVVSRGRLRRLL. Residues 56 to 76 form a helical membrane-spanning segment; that stretch reads WIGFTLTAVALILWQCALLVF. At 77 to 477 the chain is on the extracellular side; that stretch reads SFYTVSVSIK…GGQLGLWMSC (401 aa). Cystine bridges form between cysteine 100-cysteine 219, cysteine 308-cysteine 393, cysteine 330-cysteine 389, cysteine 334-cysteine 385, cysteine 343-cysteine 370, and cysteine 345-cysteine 359. N-linked (GlcNAc...) asparagine glycosylation occurs at asparagine 207. Asparagine 433 carries N-linked (GlcNAc...) asparagine glycosylation. The helical transmembrane segment at 478-498 threads the bilayer; the sequence is SVVCVIEIIEVFFIDFFSIIA. Residues 499-585 lie on the Cytoplasmic side of the membrane; that stretch reads RRQWQKAKEW…LTDTQMLDEL (87 aa). The segment at 513-534 is disordered; that stretch reads QAPPCPEAPRSPQGQDNPALDI. A PY motif; recruits WW domain-containing proteins and is thereby required for ubiquitination and inhibition of the channel by NEDD4 and NEDD4L motif is present at residues 559–563; the sequence is PPPKY.

Belongs to the amiloride-sensitive sodium channel (TC 1.A.6) family. SCNN1G subfamily. In terms of assembly, component of the heterotrimeric epithelial sodium channel (ENaC) composed of an alpha/SCNN1A, a beta/SCNN1B and a gamma/SCNN1G subunit. An additional delta/SCNN1D subunit can replace the alpha/SCNN1A subunit to form an alternative channel with specific properties. Interacts with WWP1 (via WW domains). Interacts with WWP2 (via WW domains); inhibits the channel. Interacts with the full-length immature form of PCSK9 (pro-PCSK9); inhibits ENaC by promoting its proteasomal degradation. Interacts with BPIFA1; the interaction is indirect via SCNN1B and inhibits the proteolytic maturation of SCNN1A and SCNN1G and the activation of ENaC. In terms of processing, phosphorylated on serine and threonine residues. Aldosterone and insulin increase the basal level of phosphorylation. Post-translationally, ubiquitinated. Can be ubiquitinated at multiple sites and undergo monoubiquitination and polyubiquitination. Ubiquitination by NEDD4 or NEDD4L inhibits the ENaC channel through endocytosis, intracellular retention and degradation of its individual subunits. ENaC is activated through the proteolytic maturation of its subunits. Furin cleaves the SCNN1G subunit first, followed by cleavage by prostasin (PRSS8), which results in a stepwise increase in the open probability of the channel due to the release of an inhibitory tract. BPIFA1, which is recruited by the SCNN1B subunit, prevents the proteolytic activation of ENaC. In terms of processing, N-glycosylated. N-linked glycans are processed to complex type during ENaC complex assembly and transport to the plasma membrane.

The protein localises to the apical cell membrane. The enzyme catalyses Na(+)(in) = Na(+)(out). With respect to regulation, originally identified and characterized by its inhibition by the diuretic drug amiloride. Its function is as follows. This is one of the three pore-forming subunits of the heterotrimeric epithelial sodium channel (ENaC), a critical regulator of sodium balance and fluid homeostasis. ENaC operates in epithelial tissues, where it mediates the electrodiffusion of sodium ions from extracellular fluid through the apical membrane of cells, with water following osmotically. It plays a key role in maintaining sodium homeostasis through electrogenic sodium reabsorption in the kidneys. Additionally, ENaC is essential for airway surface liquid homeostasis, which is crucial for proper mucus clearance. The sequence is that of Epithelial sodium channel subunit gamma from Pan troglodytes (Chimpanzee).